Here is a 1052-residue protein sequence, read N- to C-terminus: MAEASEAMCLEGAEWELSKENIQPLRHGRVMSTLQGALAKQESAGHTALQQQKRAFESEIRFYSGDDPLDVWDRYINWTEQNYPQGGKESNMSALVERAIEALQGETRYYNDPRFLSLWIKLGHLCNEPLDMYSYLQSQGIGVSLAQFYISWAEEYEARENFKKADIIFQEGIERKAEPLDRLQSQHRQFQSRVSRQAFLALGNEEEEALEPSEPQRSSLAELKSRGKKMARAPISRVGGALKAPGQSRGFLNAVPQPVHGNRRITVFDENADTASRTELSKPVAQPWMAPPVPRAKENELQPGPWSTDRPAGRRPHDNPASVTSIPSVLPSFTPYVEESAQQTVMTPCKIEPSINHVLSTRKPGREEGDPLQRVQSHQQGCEEKKEKMMYCKEKIYAGVGEFSFEEIRAEVFRKKLKERREAELLTSAKKREEMQKQIEEMERRLKAMQAVQQEGAGGQQEEKMPTEDPARLQIASGPQEMSGVPLSCSICPLSSNPREISPAENILQEQPDSKGSSMPFSIFDESLSDKKDKSPATGGPQVLNAQRRPLSVLKTTEVGTTNEDVSPDICDELTELEPLSEDAIITGFRNVTLCPNPEDTCDFARAARLASTPFHEILSSKGIAADPEGLLQEEDLDGKAAEAHHTVHHQALIIKKLSPIIEESREATHSSGFSRSSSSAPSTSSIKGFQLLEKLELTNDGAEDAIQSPWCSQYRLQLLKSLLELSAFAEFSVEDRPMPVLEIGKEIELGPEDYVIKQEHLTCDDYRLFWVAPRSSAELTMIKASSQPIPWDFYINLKLKERLNEDYDQLCSCCQYQDGHVVWYQYINCSTLQNLLQHSEFVTHEIIVLIIYNLLTIVEKLHRAEIVHGDLSPRSLILRNRIHDPYDYVNKDDHAVRIMDFSYSVDLRVQLDAFAYSGFRTAQILEGQKILANCSSPYHVDLLGIADLAHLLLFKEHLHVFWDGLLWKLSQSTSELKDSELWNKFFVRILNASDKSTVSVLGELAAEMGGAFDATFHSHLNRALWKLGKTISPEALLTQQDKQPGGSQSPA.

A BUB1 N-terminal domain is found at 56–219; sequence FESEIRFYSG…LEPSEPQRSS (164 aa). The Nuclear localization signal motif lies at 105 to 112; that stretch reads GETRYYND. The interval 146-179 is necessary for interaction with KNL1; it reads AQFYISWAEEYEARENFKKADIIFQEGIERKAEP. Disordered regions lie at residues 206–256 and 272–327; these read EEEA…NAVP and ADTA…TSIP. Residues 217 to 225 carry the D-box motif; it reads RSSLAELKS. K243 carries the N6-acetyllysine; by PCAF modification. S360 bears the Phosphoserine mark. The disordered stretch occupies residues 361 to 381; it reads TRKPGREEGDPLQRVQSHQQG. The residue at position 428 (S428) is a Phosphoserine. Residues 496 to 552 are disordered; that stretch reads SNPREISPAENILQEQPDSKGSSMPFSIFDESLSDKKDKSPATGGPQVLNAQRRPLS. Polar residues predominate over residues 508–520; sequence LQEQPDSKGSSMP. 2 positions are modified to phosphoserine: S535 and S659. The residue at position 665 (S665) is a Phosphoserine; by PLK1. S686 carries the post-translational modification Phosphoserine. One can recognise a Protein kinase domain in the interval 756 to 1040; sequence VIKQEHLTCD…TISPEALLTQ (285 aa). 762 to 770 lines the ATP pocket; sequence LTCDDYRLF. T781 carries the post-translational modification Phosphothreonine; by PLK1. An ATP-binding site is contributed by K784. D871 functions as the Proton acceptor in the catalytic mechanism. T998 carries the post-translational modification Phosphothreonine; by PLK1. 2 positions are modified to phosphoserine: S1033 and S1050.

The protein belongs to the protein kinase superfamily. Ser/Thr protein kinase family. BUB1 subfamily. In terms of assembly, interacts with CENPE. Interacts with PLK1. Part of a complex containing BUB3, CDC20 and BUB1B. Interacts with anaphase-promoting complex/cyclosome (APC/C). Interacts with KNL1. Interacts with KAT2B. Interacts with RIPK3. Interacts with the closed conformation form of MAD2L1. Interacts with CDC20. Proteolytically cleaved by caspase-3 in a cell cycle specific manner. The cleavage might be involved in the durability of the cell cycle delay. Post-translationally, acetylation at Lys-243 regulates its degradation and timing in anaphase entry. In terms of processing, ubiquitinated. Degraded by the proteasome. Ubiquitinated by UBR5, promoting disassembly of the mitotic checkpoint complex from the APC/C complex. Sumoylated with SUMO2 and SUMO3. The sumoylation mediates the association with CENPE at the kinetochore. Post-translationally, autophosphorylated in vitro. Intramolecular autophosphorylation stimulated by CENPE. Phosphorylated during mitosis and hyperphosphorylated in mitotically arrested cells. Phosphorylation at Ser-659 and Ser-1033 occurs at kinetochores upon mitotic entry with dephosphorylation at the onset of anaphase. In terms of processing, proteolytically cleaved by caspase-3 in a cell cycle specific manner. The cleavage might be involved in the durability of the cell cycle delay. Caspase-3 cleavage is associated with abrogation of the mitotic checkpoint. The major site of cleavage is at Asp-603. As to expression, highly expressed in thymus followed by spleen.

The protein localises to the cytoplasm. It localises to the nucleus. The protein resides in the chromosome. It is found in the centromere. Its subcellular location is the kinetochore. The enzyme catalyses L-seryl-[protein] + ATP = O-phospho-L-seryl-[protein] + ADP + H(+). The catalysed reaction is L-threonyl-[protein] + ATP = O-phospho-L-threonyl-[protein] + ADP + H(+). Its activity is regulated as follows. Kinase activity stimulated by CENPE. Its function is as follows. Essential component of the mitotic checkpoint. Required for normal mitosis progression and tumor suppression. The mitotic checkpoint delays anaphase until all chromosomes are properly attached to the mitotic spindle. One of its checkpoint functions is to inhibit the activity of the anaphase-promoting complex/cyclosome (APC/C) by blocking the binding of CDC20 to APC/C, independently of its kinase activity. The other is to monitor kinetochore activities that depend on the kinetochore motor CENPE. Required for kinetochore localization of CENPE. Negatively regulates PLK1 activity in interphase cells and suppresses centrosome amplification. Also implicated in triggering apoptosis in polyploid cells that exit aberrantly from mitotic arrest. Essential for tumor suppression. May play a role in regulating aging and fertility. In Mus musculus (Mouse), this protein is Mitotic checkpoint serine/threonine-protein kinase BUB1 beta (Bub1b).